A 497-amino-acid polypeptide reads, in one-letter code: Thiamine transporter 1 (497 aa).

Methionine 1 is subject to N-acetylmethionine. Over 1–28 (MDVPGPVSRRAAAAAATVLLRTARVRRE) the chain is Cytoplasmic. Residues 29 to 46 (CWFLPTALLCAYGFFASL) traverse the membrane as a helical segment. Residues 47 to 72 (RPSEPFLTPYLLGPDKNLTEREVFNE) lie on the Extracellular side of the membrane. Asparagine 63 carries an N-linked (GlcNAc...) asparagine glycan. Residues 73–91 (IYPVWTYSYLVLLFPVFLA) traverse the membrane as a helical segment. Over 92–99 (TDYLRYKP) the chain is Cytoplasmic. Residues 100–118 (VVLLQGLSLIVTWFMLLYA) traverse the membrane as a helical segment. Over 119–128 (QGLLAIQFLE) the chain is Extracellular. The chain crosses the membrane as a helical span at residues 129–149 (FFYGIATATEIAYYSYIYSVV). The Cytoplasmic segment spans residues 150–165 (DLGMYQKVTSYCRSAT). A helical membrane pass occupies residues 166–185 (LVGFTVGSVLGQILVSVAGW). The Extracellular segment spans residues 186-191 (SLFSLN). A helical transmembrane segment spans residues 192 to 208 (VISLTCVSVAFAVAWFL). Over 209–285 (PMPQKSLFFH…LLVLKVLWND (77 aa)) the chain is Cytoplasmic. The residue at position 222 (serine 222) is a Phosphoserine. Residues 286-310 (FLMCYSSRPLLCWSVWWALSTCGYF) traverse the membrane as a helical segment. At 311 to 337 (QVVNYTQGLWEKVMPSRYAAIYNGGVE) the chain is on the extracellular side. The N-linked (GlcNAc...) asparagine glycan is linked to asparagine 314. Residues 338–354 (AVSTLLGAVAVFAVGYI) traverse the membrane as a helical segment. The Cytoplasmic portion of the chain corresponds to 355–363 (KISWSTWGE). Residues 364 to 380 (MTLSLFSLLIAAAVYIM) form a helical membrane-spanning segment. Over 381–386 (DTVGNI) the chain is Extracellular. Residues 387–409 (WVCYASYVVFRIIYMLLITIATF) traverse the membrane as a helical segment. Over 410–419 (QIAANLSMER) the chain is Cytoplasmic. Residues 420-443 (YALVFGVNTFIALALQTLLTLIVV) traverse the membrane as a helical segment. Residues 444 to 455 (DASGLGLEITTQ) lie on the Extracellular side of the membrane. A helical transmembrane segment spans residues 456-479 (FLIYASYFALIAVVFLASGAVSVM). Over 480 to 497 (KKCRKLEDPQSSSQVTTS) the chain is Cytoplasmic.

It belongs to the reduced folate carrier (RFC) transporter (TC 2.A.48) family. In terms of assembly, interacts with TSPAN1; this interaction increases the stability of SLC19A2. Interacts with TMEM63B. In terms of tissue distribution, ubiquitous; most abundant in skeletal and cardiac muscle. Medium expression in placenta, heart, liver and kidney, low in lung.

The protein resides in the cell membrane. It catalyses the reaction thiamine(out) + H(+)(in) = thiamine(in) + H(+)(out). The enzyme catalyses pyridoxine(out) + n H(+)(out) = pyridoxine(in) + n H(+)(in). Pyridoxine transport is inhibited by carbonyl cyanide p-trifluoromethoxyphenylhydrazone (FCCP) and carbonyl cyanide m-chlorophenylhydrazone (CCCP). Functionally, high-affinity transporter for the intake of thiamine. Mediates H(+)-dependent pyridoxine transport. This Homo sapiens (Human) protein is Thiamine transporter 1 (SLC19A2).